Consider the following 385-residue polypeptide: Flap endonuclease 1 (385 aa).

An N-domain region spans residues 1–105; it reads MGIKGLNAII…HELSKRSARR (105 aa). D34 lines the Mg(2+) pocket. 2 residues coordinate DNA: R47 and R71. Residues D87, E156, E158, D177, and D179 each coordinate Mg(2+). Positions 120-251 are I-domain; the sequence is EKLKHERRLV…VTALKLIKEH (132 aa). E156 contacts DNA. 2 residues coordinate DNA: G229 and D231. D231 contributes to the Mg(2+) binding site. The interaction with PCNA stretch occupies residues 338–346; that stretch reads VQGRLDGFF. The segment covering 356 to 370 has biased composition (low complexity); sequence LAAANAKAKSTKAGK. Residues 356-385 are disordered; the sequence is LAAANAKAKSTKAGKQATKGKVGKPGRPRK. Over residues 376-385 the composition is skewed to basic residues; that stretch reads KVGKPGRPRK.

This sequence belongs to the XPG/RAD2 endonuclease family. FEN1 subfamily. In terms of assembly, interacts with PCNA. Three molecules of FEN1 bind to one PCNA trimer with each molecule binding to one PCNA monomer. PCNA stimulates the nuclease activity without altering cleavage specificity. It depends on Mg(2+) as a cofactor. Phosphorylated. Phosphorylation upon DNA damage induces relocalization to the nuclear plasma.

It localises to the nucleus. Its subcellular location is the nucleolus. The protein resides in the nucleoplasm. It is found in the mitochondrion. Functionally, structure-specific nuclease with 5'-flap endonuclease and 5'-3' exonuclease activities involved in DNA replication and repair. During DNA replication, cleaves the 5'-overhanging flap structure that is generated by displacement synthesis when DNA polymerase encounters the 5'-end of a downstream Okazaki fragment. It enters the flap from the 5'-end and then tracks to cleave the flap base, leaving a nick for ligation. Also involved in the long patch base excision repair (LP-BER) pathway, by cleaving within the apurinic/apyrimidinic (AP) site-terminated flap. Acts as a genome stabilization factor that prevents flaps from equilibrating into structures that lead to duplications and deletions. Also possesses 5'-3' exonuclease activity on nicked or gapped double-stranded DNA, and exhibits RNase H activity. Also involved in replication and repair of rDNA and in repairing mitochondrial DNA. This chain is Flap endonuclease 1, found in Lachancea thermotolerans (strain ATCC 56472 / CBS 6340 / NRRL Y-8284) (Yeast).